The chain runs to 232 residues: Expansin-YoaJ (232 aa).

The first 25 residues, 1 to 25 (MKKIMSAFVGMVLLTIFCFSPQASA), serve as a signal peptide directing secretion. Residues 58–127 (ITAINPADLN…MKDGKINIKW (70 aa)) enclose the Expansin-like EG45 domain.

It is found in the secreted. The protein localises to the cell wall. Its function is as follows. May promote colonization of plant roots. May cause loosening and extension of plant cell walls by disrupting non-covalent bonding between cellulose microfibrils and matrix glucans. Has very low expansin activity (in vitro). No enzymatic activity has been found. Binds to peptidoglycan and to plant cell walls. This chain is Expansin-YoaJ (yoaJ), found in Bacillus subtilis (strain 168).